The primary structure comprises 32 residues: U3-ctenitoxin-Pk1a (32 aa).

Disulfide bonds link C3–C17, C10–C21, and C16–C30.

The protein belongs to the neurotoxin 17 (21C2) family. As to expression, expressed by the venom gland.

The protein resides in the secreted. Its function is as follows. May act as a neurotoxin. This is U3-ctenitoxin-Pk1a from Phoneutria keyserlingi (Brazilian wandering spider).